Here is an 81-residue protein sequence, read N- to C-terminus: Styelin-E (81 aa).

Residues 1–22 form the signal peptide; sequence MQMKATILIVLVALFMIQQSEA. Residue Trp-24 is modified to 6'-bromotryptophan. Arg-26 is subject to 3,4-dihydroxyarginine. Residues Lys-27, Lys-30, and Lys-34 each carry the 4,5-dihydroxylysine modification. 3',4'-dihydroxyphenylalanine is present on residues Tyr-36 and Tyr-37. Lys-38 bears the 4,5-dihydroxylysine mark. Lys-40 is subject to 5-hydroxylysine. 3',4'-dihydroxyphenylalanine is present on residues Tyr-41 and Tyr-42. Lys-44 carries the 5-hydroxylysine modification. At Leu-54 the chain carries Leucine amide. Residues 56 to 81 constitute a propeptide, removed in mature form; that stretch reads DMTDEEFQDFMKEVEQAREEELQSRQ.

Contains L-DOPA (3',4'-dihydroxyphenylalanine). Hemocytes and pharyngeal tissues.

Its subcellular location is the secreted. Functionally, bactericidal against several Gram-positive and Gram-negative bacteria. In Styela clava (Sea squirt), this protein is Styelin-E.